The following is a 158-amino-acid chain: C-type lectin lectoxin-Enh7 (158 aa).

Positions 1-23 (MGQFTVVSLGLLAVFLSLSGAKG) are cleaved as a signal peptide. 3 disulfides stabilise this stretch: C26/C37, C54/C154, and C129/C146. Positions 33-155 (RNGVCNKLFP…CASLHPFICQ (123 aa)) constitute a C-type lectin domain. The Mannose-binding signature appears at 119–121 (EPN). Ca(2+) is bound by residues E127, N142, and D143.

It belongs to the true venom lectin family. Expressed by the venom gland.

It is found in the secreted. Mannose-binding lectin which recognizes specific carbohydrate structures and agglutinates a variety of animal cells by binding to cell-surface glycoproteins and glycolipids. May be a calcium-dependent lectin. This chain is C-type lectin lectoxin-Enh7, found in Pseudoferania polylepis (Macleay's water snake).